A 37-amino-acid chain; its full sequence is MKVNPSVKKICDKCKVIRRNGRVMVICENPRHKQRQG.

The protein belongs to the bacterial ribosomal protein bL36 family.

This Leifsonia xyli subsp. xyli (strain CTCB07) protein is Large ribosomal subunit protein bL36A.